A 132-amino-acid chain; its full sequence is CLAVATA3/ESR (CLE)-related protein 2-B (132 aa).

Residues 1–26 (MASRMGMVAILSLFVCALVASTSVNA) form the signal peptide. The interval 68–132 (NRASKQLDRE…IGPPPFLDRY (65 aa)) is disordered. 2 positions are modified to hydroxyproline: proline 82 and proline 85. O-linked (Ara...) hydroxyproline glycosylation is present at proline 85.

Belongs to the CLV3/ESR signal peptide family. In terms of processing, the O-glycosylation (arabinosylation) of the hydroxyproline Pro-85 enhances binding affinity of the ESR2Bp peptide for its receptor. As to expression, seed endosperm.

Its subcellular location is the secreted. The protein resides in the extracellular space. Functionally, extracellular signal peptide that regulates cell fate. This is CLAVATA3/ESR (CLE)-related protein 2-B from Zea mays (Maize).